The chain runs to 431 residues: Adenylosuccinate synthetase (431 aa).

Residues 13–19 (GDEGKGK) and 41–43 (GHT) each bind GTP. Residue D14 is the Proton acceptor of the active site. Mg(2+)-binding residues include D14 and G41. IMP-binding positions include 14–17 (DEGK), 39–42 (NAGH), T130, R144, Q225, T240, and R304. Catalysis depends on H42, which acts as the Proton donor. 300 to 306 (ATTGRKR) contacts substrate. Residues R306, 332–334 (KLD), and 415–417 (STG) contribute to the GTP site.

It belongs to the adenylosuccinate synthetase family. Homodimer. It depends on Mg(2+) as a cofactor.

It is found in the cytoplasm. It catalyses the reaction IMP + L-aspartate + GTP = N(6)-(1,2-dicarboxyethyl)-AMP + GDP + phosphate + 2 H(+). It participates in purine metabolism; AMP biosynthesis via de novo pathway; AMP from IMP: step 1/2. Its function is as follows. Plays an important role in the de novo pathway of purine nucleotide biosynthesis. Catalyzes the first committed step in the biosynthesis of AMP from IMP. The sequence is that of Adenylosuccinate synthetase from Shewanella piezotolerans (strain WP3 / JCM 13877).